A 176-amino-acid chain; its full sequence is RNA 2',3'-cyclic phosphodiesterase (176 aa).

His28 functions as the Proton donor in the catalytic mechanism. Short sequence motifs (HXTX) lie at residues 28–31 (HITL) and 113–116 (HVTL). His113 serves as the catalytic Proton acceptor.

Belongs to the 2H phosphoesterase superfamily. ThpR family.

It catalyses the reaction a 3'-end 2',3'-cyclophospho-ribonucleotide-RNA + H2O = a 3'-end 2'-phospho-ribonucleotide-RNA + H(+). Functionally, hydrolyzes RNA 2',3'-cyclic phosphodiester to an RNA 2'-phosphomonoester. This is RNA 2',3'-cyclic phosphodiesterase from Aeropyrum pernix (strain ATCC 700893 / DSM 11879 / JCM 9820 / NBRC 100138 / K1).